The sequence spans 183 residues: Crossover junction endodeoxyribonuclease RuvC (183 aa).

Active-site residues include D16, E75, and D147. Residues D16, E75, and D147 each coordinate Mg(2+).

This sequence belongs to the RuvC family. Homodimer which binds Holliday junction (HJ) DNA. The HJ becomes 2-fold symmetrical on binding to RuvC with unstacked arms; it has a different conformation from HJ DNA in complex with RuvA. In the full resolvosome a probable DNA-RuvA(4)-RuvB(12)-RuvC(2) complex forms which resolves the HJ. It depends on Mg(2+) as a cofactor.

It localises to the cytoplasm. The catalysed reaction is Endonucleolytic cleavage at a junction such as a reciprocal single-stranded crossover between two homologous DNA duplexes (Holliday junction).. Its function is as follows. The RuvA-RuvB-RuvC complex processes Holliday junction (HJ) DNA during genetic recombination and DNA repair. Endonuclease that resolves HJ intermediates. Cleaves cruciform DNA by making single-stranded nicks across the HJ at symmetrical positions within the homologous arms, yielding a 5'-phosphate and a 3'-hydroxyl group; requires a central core of homology in the junction. The consensus cleavage sequence is 5'-(A/T)TT(C/G)-3'. Cleavage occurs on the 3'-side of the TT dinucleotide at the point of strand exchange. HJ branch migration catalyzed by RuvA-RuvB allows RuvC to scan DNA until it finds its consensus sequence, where it cleaves and resolves the cruciform DNA. This chain is Crossover junction endodeoxyribonuclease RuvC, found in Azoarcus sp. (strain BH72).